The primary structure comprises 187 residues: Elongation factor P (187 aa).

Belongs to the elongation factor P family.

It localises to the cytoplasm. It participates in protein biosynthesis; polypeptide chain elongation. Its function is as follows. Involved in peptide bond synthesis. Stimulates efficient translation and peptide-bond synthesis on native or reconstituted 70S ribosomes in vitro. Probably functions indirectly by altering the affinity of the ribosome for aminoacyl-tRNA, thus increasing their reactivity as acceptors for peptidyl transferase. The polypeptide is Elongation factor P (Roseiflexus castenholzii (strain DSM 13941 / HLO8)).